The sequence spans 308 residues: Transaldolase (308 aa).

Lys125 serves as the catalytic Schiff-base intermediate with substrate.

This sequence belongs to the transaldolase family. Type 1 subfamily. As to quaternary structure, homodimer.

It localises to the cytoplasm. It carries out the reaction D-sedoheptulose 7-phosphate + D-glyceraldehyde 3-phosphate = D-erythrose 4-phosphate + beta-D-fructose 6-phosphate. It participates in carbohydrate degradation; pentose phosphate pathway; D-glyceraldehyde 3-phosphate and beta-D-fructose 6-phosphate from D-ribose 5-phosphate and D-xylulose 5-phosphate (non-oxidative stage): step 2/3. Transaldolase is important for the balance of metabolites in the pentose-phosphate pathway. The polypeptide is Transaldolase (Ectopseudomonas mendocina (strain ymp) (Pseudomonas mendocina)).